The chain runs to 129 residues: Glycine cleavage system H protein (129 aa).

A Lipoyl-binding domain is found at 24–106 (LLKIGVSEFA…IGDGWLVILK (83 aa)). Lys-65 carries the post-translational modification N6-lipoyllysine.

The protein belongs to the GcvH family. The glycine cleavage system is composed of four proteins: P, T, L and H. It depends on (R)-lipoate as a cofactor.

The glycine cleavage system catalyzes the degradation of glycine. The H protein shuttles the methylamine group of glycine from the P protein to the T protein. This chain is Glycine cleavage system H protein, found in Prochlorococcus marinus (strain MIT 9301).